Consider the following 177-residue polypeptide: uncharacterized protein (177 aa).

Residues 10–177 (LILRQITDQD…NVYSIVKPRE (168 aa)) enclose the N-acetyltransferase domain.

The protein belongs to the acetyltransferase family.

This is an uncharacterized protein from Bacillus subtilis (strain 168).